Consider the following 336-residue polypeptide: Cell division protein ZipA (336 aa).

Over Met-1–Arg-6 the chain is Periplasmic. Residues Leu-7–Thr-27 traverse the membrane as a helical segment. Over Ser-28 to Ala-336 the chain is Cytoplasmic. A compositionally biased stretch (basic and acidic residues) spans Pro-40–Thr-51. A disordered region spans residues Pro-40–Glu-190. The span at Ser-76 to Asn-89 shows a compositional bias: low complexity. Positions Pro-126–Val-138 are enriched in polar residues. Residues Gln-179 to Glu-190 show a composition bias toward low complexity.

Belongs to the ZipA family. In terms of assembly, interacts with FtsZ via their C-terminal domains.

Its subcellular location is the cell inner membrane. Its function is as follows. Essential cell division protein that stabilizes the FtsZ protofilaments by cross-linking them and that serves as a cytoplasmic membrane anchor for the Z ring. Also required for the recruitment to the septal ring of downstream cell division proteins. In Pectobacterium carotovorum subsp. carotovorum (strain PC1), this protein is Cell division protein ZipA.